The primary structure comprises 417 residues: RH-like protein IIR (417 aa).

Transmembrane regions (helical) follow at residues 12 to 32, 44 to 64, 77 to 97, 125 to 145, 172 to 192, 203 to 223, 238 to 258, 265 to 285, 287 to 307, 331 to 351, and 358 to 378; these read CLPLCALTLEAALILLFYFFT, LVASYQVGQDLTVMAAIGFGF, VAFSLFMLALGVQWAILLDGF, ISVDAVLGKVNLVQLVVMVLV, IYVFAAYFGLSVAWCLPKPLP, TIPSLSAMLGALFLWMFWPSF, VFNTYYAVAVSVVTAISGSSL, ISMSYMHNAVLAGGVAVGTSC, LIPSPWLAMVLGLVAGLISVG, NFSWLGLLGEIIYIVLVVRHT, and MIGFQVLLRIGEFSLATTIAL.

It belongs to the ammonium transporter (TC 2.A.49) family. Rh subfamily.

It localises to the membrane. Functionally, may be part of an oligomeric complex which is likely to have a transport or channel function in the erythrocyte membrane. In Pan troglodytes (Chimpanzee), this protein is RH-like protein IIR.